We begin with the raw amino-acid sequence, 488 residues long: Zinc finger protein 345 (488 aa).

15 C2H2-type zinc fingers span residues 62–84 (LECK…QRIH), 90–112 (YECK…QRIH), 118–140 (FECK…QRIH), 146–168 (YECK…QIIH), 174–196 (YECK…HRIH), 202–224 (YECI…RRIH), 230–252 (YECK…QRIH), 258–280 (YICN…QRIH), 286–308 (YVCK…QRIH), 314–336 (YECK…QRMH), 342–364 (YECK…HRIH), 370–392 (YECK…QLIH), 398–420 (YECK…QRIH), 426–448 (YECK…QRIH), and 454–476 (YECK…KKSH).

The protein belongs to the krueppel C2H2-type zinc-finger protein family.

The protein localises to the nucleus. Functionally, may be involved in transcriptional regulation. The polypeptide is Zinc finger protein 345 (ZNF345) (Homo sapiens (Human)).